The primary structure comprises 956 residues: Matrilin-2 (956 aa).

Positions 1–23 (MEKMLVGCLLMLGQLFLVLPVDG) are cleaved as a signal peptide. One can recognise a VWFA 1 domain in the interval 57 to 232 (DLVFIIDSSR…SQIESLTSVF (176 aa)). Asn221 is a glycosylation site (N-linked (GlcNAc...) asparagine). 10 EGF-like domains span residues 238 to 278 (TVHM…KTCR), 279 to 319 (IQDL…KRCT), 320 to 360 (AVDY…KTCS), 361 to 401 (KIDY…KTCR), 402 to 442 (RINY…KTCS), 443 to 483 (RVDH…KTCS), 484 to 524 (RADY…KTCA), 525 to 565 (KLDS…KTCR), 566 to 606 (RKDV…KRCR), and 607 to 647 (RKNV…KHCK). Disulfide bonds link Cys242–Cys253, Cys249–Cys262, Cys264–Cys277, Cys283–Cys294, Cys290–Cys303, Cys305–Cys318, Cys324–Cys335, Cys331–Cys344, Cys346–Cys359, Cys365–Cys376, Cys372–Cys385, Cys387–Cys400, Cys406–Cys417, Cys413–Cys426, Cys428–Cys441, Cys447–Cys458, Cys454–Cys467, Cys469–Cys482, Cys488–Cys499, Cys495–Cys508, Cys510–Cys523, Cys529–Cys540, Cys536–Cys549, Cys551–Cys564, Cys570–Cys581, Cys577–Cys590, Cys592–Cys605, Cys611–Cys622, Cys618–Cys631, and Cys633–Cys646. Positions 655 to 830 (DLVFVIDGSK…STMGEISEKL (176 aa)) constitute a VWFA 2 domain. Asn890 carries an N-linked (GlcNAc...) asparagine glycan. Residues 917–955 (KCENLILFQNVANEEVRKLTQRLEEMTQRMEALENRLKY) are a coiled coil.

In terms of tissue distribution, detected in a variety of organs, including calvaria, uterus, heart and brain, as well as fibroblast and osteoblast cell lines.

The protein resides in the secreted. In terms of biological role, involved in matrix assembly. This chain is Matrilin-2 (Matn2), found in Mus musculus (Mouse).